A 95-amino-acid polypeptide reads, in one-letter code: Aspartyl/glutamyl-tRNA(Asn/Gln) amidotransferase subunit C (95 aa).

It belongs to the GatC family. As to quaternary structure, heterotrimer of A, B and C subunits.

The enzyme catalyses L-glutamyl-tRNA(Gln) + L-glutamine + ATP + H2O = L-glutaminyl-tRNA(Gln) + L-glutamate + ADP + phosphate + H(+). The catalysed reaction is L-aspartyl-tRNA(Asn) + L-glutamine + ATP + H2O = L-asparaginyl-tRNA(Asn) + L-glutamate + ADP + phosphate + 2 H(+). Functionally, allows the formation of correctly charged Asn-tRNA(Asn) or Gln-tRNA(Gln) through the transamidation of misacylated Asp-tRNA(Asn) or Glu-tRNA(Gln) in organisms which lack either or both of asparaginyl-tRNA or glutaminyl-tRNA synthetases. The reaction takes place in the presence of glutamine and ATP through an activated phospho-Asp-tRNA(Asn) or phospho-Glu-tRNA(Gln). The chain is Aspartyl/glutamyl-tRNA(Asn/Gln) amidotransferase subunit C from Chloroherpeton thalassium (strain ATCC 35110 / GB-78).